A 207-amino-acid polypeptide reads, in one-letter code: dTTP/UTP pyrophosphatase (207 aa).

Catalysis depends on Asp79, which acts as the Proton acceptor.

The protein belongs to the Maf family. YhdE subfamily. Requires a divalent metal cation as cofactor.

The protein localises to the cytoplasm. The catalysed reaction is dTTP + H2O = dTMP + diphosphate + H(+). It catalyses the reaction UTP + H2O = UMP + diphosphate + H(+). In terms of biological role, nucleoside triphosphate pyrophosphatase that hydrolyzes dTTP and UTP. May have a dual role in cell division arrest and in preventing the incorporation of modified nucleotides into cellular nucleic acids. The polypeptide is dTTP/UTP pyrophosphatase (Rhodopseudomonas palustris (strain ATCC BAA-98 / CGA009)).